The following is a 418-amino-acid chain: Gamma-glutamyl phosphate reductase (418 aa).

This sequence belongs to the gamma-glutamyl phosphate reductase family.

The protein resides in the cytoplasm. It carries out the reaction L-glutamate 5-semialdehyde + phosphate + NADP(+) = L-glutamyl 5-phosphate + NADPH + H(+). It functions in the pathway amino-acid biosynthesis; L-proline biosynthesis; L-glutamate 5-semialdehyde from L-glutamate: step 2/2. Catalyzes the NADPH-dependent reduction of L-glutamate 5-phosphate into L-glutamate 5-semialdehyde and phosphate. The product spontaneously undergoes cyclization to form 1-pyrroline-5-carboxylate. The protein is Gamma-glutamyl phosphate reductase of Histophilus somni (strain 2336) (Haemophilus somnus).